A 338-amino-acid polypeptide reads, in one-letter code: tRNA N6-adenosine threonylcarbamoyltransferase (338 aa).

Histidine 111 and histidine 115 together coordinate Fe cation. Substrate is bound by residues 134 to 138 (LVSGG), aspartate 167, glycine 180, and asparagine 272. A Fe cation-binding site is contributed by aspartate 300.

It belongs to the KAE1 / TsaD family. Fe(2+) is required as a cofactor.

The protein resides in the cytoplasm. It catalyses the reaction L-threonylcarbamoyladenylate + adenosine(37) in tRNA = N(6)-L-threonylcarbamoyladenosine(37) in tRNA + AMP + H(+). Its function is as follows. Required for the formation of a threonylcarbamoyl group on adenosine at position 37 (t(6)A37) in tRNAs that read codons beginning with adenine. Is involved in the transfer of the threonylcarbamoyl moiety of threonylcarbamoyl-AMP (TC-AMP) to the N6 group of A37, together with TsaE and TsaB. TsaD likely plays a direct catalytic role in this reaction. In Nitrosomonas eutropha (strain DSM 101675 / C91 / Nm57), this protein is tRNA N6-adenosine threonylcarbamoyltransferase.